A 38-amino-acid chain; its full sequence is Photosystem II reaction center protein L (38 aa).

Residues 17-37 form a helical membrane-spanning segment; it reads SLYWGLLLIFVLAVLFSSYIF.

Belongs to the PsbL family. As to quaternary structure, PSII is composed of 1 copy each of membrane proteins PsbA, PsbB, PsbC, PsbD, PsbE, PsbF, PsbH, PsbI, PsbJ, PsbK, PsbL, PsbM, PsbT, PsbX, PsbY, PsbZ, Psb30/Ycf12, at least 3 peripheral proteins of the oxygen-evolving complex and a large number of cofactors. It forms dimeric complexes.

It is found in the plastid. The protein resides in the chloroplast thylakoid membrane. One of the components of the core complex of photosystem II (PSII). PSII is a light-driven water:plastoquinone oxidoreductase that uses light energy to abstract electrons from H(2)O, generating O(2) and a proton gradient subsequently used for ATP formation. It consists of a core antenna complex that captures photons, and an electron transfer chain that converts photonic excitation into a charge separation. This subunit is found at the monomer-monomer interface and is required for correct PSII assembly and/or dimerization. The sequence is that of Photosystem II reaction center protein L from Oltmannsiellopsis viridis (Marine flagellate).